Reading from the N-terminus, the 287-residue chain is Energy-coupling factor transporter ATP-binding protein EcfA (287 aa).

In terms of domain architecture, ABC transporter spans 19-252; that stretch reads FEIQNVSFSY…EEFLASSALD (234 aa). 52–59 contributes to the ATP binding site; sequence GHNGSGKS.

Belongs to the ABC transporter superfamily. Energy-coupling factor EcfA family. As to quaternary structure, forms a stable energy-coupling factor (ECF) transporter complex composed of 2 membrane-embedded substrate-binding proteins (S component), 2 ATP-binding proteins (A component) and 2 transmembrane proteins (T component).

The protein localises to the cell membrane. Functionally, ATP-binding (A) component of a common energy-coupling factor (ECF) ABC-transporter complex. Unlike classic ABC transporters this ECF transporter provides the energy necessary to transport a number of different substrates. In Malacoplasma penetrans (strain HF-2) (Mycoplasma penetrans), this protein is Energy-coupling factor transporter ATP-binding protein EcfA.